The primary structure comprises 75 residues: Large ribosomal subunit protein bL31 (75 aa).

Residues C16, C18, C37, and C40 each coordinate Zn(2+).

The protein belongs to the bacterial ribosomal protein bL31 family. Type A subfamily. As to quaternary structure, part of the 50S ribosomal subunit. Requires Zn(2+) as cofactor.

Binds the 23S rRNA. This Nitrosospira multiformis (strain ATCC 25196 / NCIMB 11849 / C 71) protein is Large ribosomal subunit protein bL31.